The following is a 409-amino-acid chain: Transcriptional regulator GME11370 (409 aa).

The segment at residues 17–44 (CHACAASKLKCSKEKPSCARCLKRNKPC) is a DNA-binding region (zn(2)-C6 fungal-type). A disordered region spans residues 49–83 (TRRAGRHHGSRSKKVPTISPASAPEPQPFSTTPPD). Basic residues predominate over residues 51 to 62 (RAGRHHGSRSKK).

It localises to the nucleus. In terms of biological role, transcriptional regulator; part of the gene cluster that mediates the biosynthesis of dibenzodioxocinones such as pestalotiollide B, a novel class of inhibitors against cholesterol ester transfer protein (CEPT). This chain is Transcriptional regulator GME11370, found in Pestalotiopsis microspora.